The following is a 139-amino-acid chain: Putative nickel-responsive regulator (139 aa).

Residues histidine 79, histidine 90, histidine 92, and cysteine 98 each coordinate Ni(2+).

Belongs to the transcriptional regulatory CopG/NikR family. Ni(2+) is required as a cofactor.

In terms of biological role, transcriptional regulator. The sequence is that of Putative nickel-responsive regulator from Pelobacter propionicus (strain DSM 2379 / NBRC 103807 / OttBd1).